We begin with the raw amino-acid sequence, 396 residues long: MTKTIAINAGSSSLKWQLYLMPEEKVLAKGLIERIGLKDSISTVKFDGRSEQQILDIENHIQAVKILLDDLIRFDIIKAYDEITGVGHRVVAGGEYFKESTVVEGDVLEKVEELSLLAPLHNPANAAGVRAFKELLPDITSVVVFDTSFHTSMPEKAYRYPLPTKYYTENKVRKYGAHGTSHQFVAGEAAKLLGRPLEDLKLITCHIGNGGSITAVKAGKSVDTSMGFTPLGGIMMGTRTGDIDPAIIPYLMQYTEDFNTPEDISRVLNRESGLLGVSANSSDMRDIEAAVAEGNHEASLAYEMYVDRIQKHIGQYLAVLNGADAIVFTAGVGENAESFRRDVISGISWFGCDVDDEKNVFGVTGDISTEAAKIRVLVIPTDEELVIARDVERLKK.

Residue asparagine 8 participates in Mg(2+) binding. Lysine 15 is an ATP binding site. Arginine 89 is a binding site for substrate. Catalysis depends on aspartate 146, which acts as the Proton donor/acceptor. ATP contacts are provided by residues 206-210 (HIGNG), 283-285 (DMR), and 331-335 (GVGEN). Residue glutamate 383 coordinates Mg(2+).

It belongs to the acetokinase family. Homodimer. Mg(2+) serves as cofactor. It depends on Mn(2+) as a cofactor.

It localises to the cytoplasm. The enzyme catalyses acetate + ATP = acetyl phosphate + ADP. It functions in the pathway metabolic intermediate biosynthesis; acetyl-CoA biosynthesis; acetyl-CoA from acetate: step 1/2. Functionally, catalyzes the formation of acetyl phosphate from acetate and ATP. Can also catalyze the reverse reaction. In Streptococcus pneumoniae serotype 2 (strain D39 / NCTC 7466), this protein is Acetate kinase.